Here is a 189-residue protein sequence, read N- to C-terminus: UPF0494 membrane protein C977.06 (189 aa).

3 helical membrane passes run 78–98 (WPLLIIWCILIVFAIDKNFEV), 120–140 (IWGPIAIYICLFVLLLLGLIY), and 148–168 (AIPLISIVIAAVVVIIAVAMV).

It belongs to the UPF0494 family.

The protein localises to the membrane. This Schizosaccharomyces pombe (strain 972 / ATCC 24843) (Fission yeast) protein is UPF0494 membrane protein C977.06.